The primary structure comprises 483 residues: Probable cytosol aminopeptidase (483 aa).

Residues lysine 252 and aspartate 257 each coordinate Mn(2+). The active site involves lysine 264. Mn(2+)-binding residues include aspartate 275, aspartate 334, and glutamate 336. Arginine 338 is an active-site residue.

It belongs to the peptidase M17 family. Mn(2+) is required as a cofactor.

It localises to the cytoplasm. The enzyme catalyses Release of an N-terminal amino acid, Xaa-|-Yaa-, in which Xaa is preferably Leu, but may be other amino acids including Pro although not Arg or Lys, and Yaa may be Pro. Amino acid amides and methyl esters are also readily hydrolyzed, but rates on arylamides are exceedingly low.. It catalyses the reaction Release of an N-terminal amino acid, preferentially leucine, but not glutamic or aspartic acids.. Functionally, presumably involved in the processing and regular turnover of intracellular proteins. Catalyzes the removal of unsubstituted N-terminal amino acids from various peptides. This is Probable cytosol aminopeptidase from Legionella pneumophila (strain Paris).